A 592-amino-acid chain; its full sequence is Aspartate--tRNA(Asp/Asn) ligase (592 aa).

Residue Glu-175 participates in L-aspartate binding. Residues 199 to 202 (QQFK) are aspartate. L-aspartate-binding residues include Arg-221 and His-451. 221–223 (RDE) is a binding site for ATP. An ATP-binding site is contributed by Glu-485. Arg-492 contacts L-aspartate. 537 to 540 (GIDR) contacts ATP.

The protein belongs to the class-II aminoacyl-tRNA synthetase family. Type 1 subfamily. As to quaternary structure, homodimer.

It is found in the cytoplasm. The enzyme catalyses tRNA(Asx) + L-aspartate + ATP = L-aspartyl-tRNA(Asx) + AMP + diphosphate. Functionally, aspartyl-tRNA synthetase with relaxed tRNA specificity since it is able to aspartylate not only its cognate tRNA(Asp) but also tRNA(Asn). Reaction proceeds in two steps: L-aspartate is first activated by ATP to form Asp-AMP and then transferred to the acceptor end of tRNA(Asp/Asn). The sequence is that of Aspartate--tRNA(Asp/Asn) ligase from Phenylobacterium zucineum (strain HLK1).